The primary structure comprises 274 residues: 4-diphosphocytidyl-2-C-methyl-D-erythritol kinase (274 aa).

The active site involves lysine 10. 101 to 111 (PTQAGLGGGSA) is a binding site for ATP. The active site involves aspartate 143.

This sequence belongs to the GHMP kinase family. IspE subfamily.

It carries out the reaction 4-CDP-2-C-methyl-D-erythritol + ATP = 4-CDP-2-C-methyl-D-erythritol 2-phosphate + ADP + H(+). It participates in isoprenoid biosynthesis; isopentenyl diphosphate biosynthesis via DXP pathway; isopentenyl diphosphate from 1-deoxy-D-xylulose 5-phosphate: step 3/6. In terms of biological role, catalyzes the phosphorylation of the position 2 hydroxy group of 4-diphosphocytidyl-2C-methyl-D-erythritol. In Helicobacter pylori (strain J99 / ATCC 700824) (Campylobacter pylori J99), this protein is 4-diphosphocytidyl-2-C-methyl-D-erythritol kinase.